Here is a 652-residue protein sequence, read N- to C-terminus: Threonine--tRNA ligase (652 aa).

In terms of domain architecture, TGS spans methionine 1–threonine 64. Residues aspartate 245 to proline 542 form a catalytic region. Cysteine 338, histidine 389, and histidine 519 together coordinate Zn(2+).

It belongs to the class-II aminoacyl-tRNA synthetase family. As to quaternary structure, homodimer. The cofactor is Zn(2+).

It localises to the cytoplasm. The enzyme catalyses tRNA(Thr) + L-threonine + ATP = L-threonyl-tRNA(Thr) + AMP + diphosphate + H(+). In terms of biological role, catalyzes the attachment of threonine to tRNA(Thr) in a two-step reaction: L-threonine is first activated by ATP to form Thr-AMP and then transferred to the acceptor end of tRNA(Thr). Also edits incorrectly charged L-seryl-tRNA(Thr). This chain is Threonine--tRNA ligase, found in Geobacillus kaustophilus (strain HTA426).